The primary structure comprises 831 residues: uncharacterized protein (831 aa).

One can recognise a CID domain in the interval 1–146 (MDIFDSTITS…RAFSILSGVA (146 aa)). Disordered stretches follow at residues 205–233 (SSSS…SSIS), 265–354 (KEHF…NYNN), 434–480 (IGNS…NEDS), and 572–831 (CGAD…SNRH). 2 stretches are compositionally biased toward low complexity: residues 272-354 (NDTS…NYNN) and 434-477 (IGNS…NNNN). Composition is skewed to basic and acidic residues over residues 592-601 (NENKQNDSHR) and 611-813 (SRGE…RSKE). Residues 817–831 (NNDNRSSSNRSSNRH) show a composition bias toward low complexity.

This is an uncharacterized protein from Dictyostelium discoideum (Social amoeba).